Consider the following 171-residue polypeptide: NADH-quinone oxidoreductase subunit I (171 aa).

2 4Fe-4S ferredoxin-type domains span residues Arg-63 to Asp-92 and Thr-102 to Ile-131. Positions 72, 75, 78, 82, 111, 114, 117, and 121 each coordinate [4Fe-4S] cluster.

It belongs to the complex I 23 kDa subunit family. In terms of assembly, NDH-1 is composed of 14 different subunits. Subunits NuoA, H, J, K, L, M, N constitute the membrane sector of the complex. [4Fe-4S] cluster serves as cofactor.

The protein localises to the cell inner membrane. It catalyses the reaction a quinone + NADH + 5 H(+)(in) = a quinol + NAD(+) + 4 H(+)(out). NDH-1 shuttles electrons from NADH, via FMN and iron-sulfur (Fe-S) centers, to quinones in the respiratory chain. The immediate electron acceptor for the enzyme in this species is believed to be ubiquinone. Couples the redox reaction to proton translocation (for every two electrons transferred, four hydrogen ions are translocated across the cytoplasmic membrane), and thus conserves the redox energy in a proton gradient. This is NADH-quinone oxidoreductase subunit I from Paracidovorax citrulli (strain AAC00-1) (Acidovorax citrulli).